We begin with the raw amino-acid sequence, 2963 residues long: tRNA nuclease CdiA (2963 aa).

The first 29 residues, 1-29, serve as a signal peptide directing secretion; sequence MIPIYLRQKLISYALIYLVAIQPIMPVMA. Residues 35-320 form a two-partner system transport domain (TPS) region; that stretch reads AQGSTALDKA…AQGNITLNSH (286 aa). The tract at residues 573-1074 is FHA-1; the sequence is GNVVAQEHAQ…MVLNTASLLN (502 aa). A receptor binding domain (RBD) region spans residues 1075–1342; sequence RRDGFSVTEK…KPLTRAQLSD (268 aa). The interval 1343–1528 is YP domain; sequence YPLPDSNNGL…LAKAEQAHLQ (186 aa). Residues 1529–1751 form a periplasmic FHA-1 repeat (pFR) region; that stretch reads GSVISGNKVE…ATLQAERDVN (223 aa). A compositionally biased stretch (basic and acidic residues) spans 1759–1770; it reads TRNQHIDSEDKT. 2 disordered regions span residues 1759–1787 and 1992–2012; these read TRNQHIDSEDKTTGYTRSTLSSGGDLTAS and SKSSRQQINQEGSKQSESASA. The FHA-2 stretch occupies residues 1762 to 2314; the sequence is QHIDSEDKTT…DSDNYNSIQK (553 aa). Polar residues predominate over residues 1771-1782; sequence TGYTRSTLSSGG. The VEDN CT cleavage motif signature appears at 2694–2697; that stretch reads VEDN. The segment at 2694-2963 is C-terminal effector domain (CT); sequence VEDNNLSFGK…TGRVRNFHPN (270 aa).

In the N-terminal section; belongs to the CdiA toxin family. The protein in the C-terminal section; belongs to the bacterial EndoU family. Forms a 1:1 complex with cognate immunity protein CdiI.

The protein resides in the secreted. The protein localises to the target cell. It localises to the target cell cytoplasm. In terms of biological role, toxic component of a toxin-immunity protein module, which functions as a cellular contact-dependent growth inhibition (CDI) system. CDI modules allow bacteria to communicate with and inhibit the growth of closely related neighboring bacteria in a contact-dependent fashion. Targeting of the CT domain (residues 2824-2963) in the absence of immunity protein inhibits cell growth and causes tRNA(UUC-Glu) cleavage in the anticodon loop; expression of cognate immunity protein CdiI-43969 neutralizes growth inhibition and tRNA(UUC-Glu) remains intact, whereas non-cognate immunity proteins do not confer protection from the toxic effects. Functionally, the CdiA protein is thought to be exported from the cell through the central lumen of CdiB, the other half of its two-partner system (TPS). The TPS domain probably remains associated with CdiB while the FHA-1 domain forms an extended filament with the receptor-binding domain (RBD) at its extremity; in the secretion arrested state the C-terminus of the RBD and YP domains form a hairpin-like structure as the FHA-2, PT and CT domains are periplasmic. The YP domain is probably responsible for this arrest at the point where it re-enters the host cell periplasm. Upon binding to a target cell outer membrane receptor a signal is transmitted to activate secretion. The filament elongates slightly, the rest of CdiA is secreted and the FHA-2 domain becomes stably associated with the target cell's outer membrane where it facilitates entry of the toxic CT domain into the target cell periplasm. From there the toxic CT domain is cleaved and gains access to the target cell cytoplasm via an inner membrane protein. The chain is tRNA nuclease CdiA from Yersinia mollaretii (strain ATCC 43969 / DSM 18520 / CIP 103324 / CNY 7263 / WAIP 204).